The sequence spans 712 residues: Translation initiation factor eIF2B subunit epsilon (712 aa).

Residues 1–20 (MAGKKGQKKSGLGNHGKNSD) are disordered. 6 positions are modified to phosphoserine: S478, S481, S507, S525, S538, and S707. The region spanning 539–710 (EFEDEDFEKE…QNADEESSSE (172 aa)) is the W2 domain.

This sequence belongs to the eIF-2B gamma/epsilon subunits family. As to quaternary structure, component of the translation initiation factor 2B (eIF2B) complex which is a heterodecamer of two sets of five different subunits: alpha, beta, gamma, delta and epsilon. Subunits alpha, beta and delta comprise a regulatory subcomplex and subunits epsilon and gamma comprise a catalytic subcomplex. Within the complex, the hexameric regulatory complex resides at the center, with the two heterodimeric catalytic subcomplexes bound on opposite sides.

It localises to the cytoplasm. It is found in the cytosol. Its function is as follows. Acts as a catalytic component of the translation initiation factor 2B (eIF2B) complex, which catalyzes the exchange of GDP for GTP on eukaryotic initiation factor 2 (eIF2) and is regulated by phosphorylated eIF2. Its guanine nucleotide exchange factor activity is repressed when bound to eIF2 complex phosphorylated on the alpha subunit, thereby limiting the amount of methionyl-initiator methionine tRNA available to the ribosome and consequently global translation is repressed. It activates the synthesis of GCN4 in yeast under amino acid starvation conditions by suppressing the inhibitory effects of multiple AUG codons present in the leader of GCN4 mRNA. It may promote either repression or activation of GCN4 expression depending on amino acid availability. GCD6 and GCD7 repress GCN4 expression at the translational level by ensuring that ribosomes which have translated UORF1 will reinitiate at UORF2, -3, or -4 and thus fail to reach the GCN4 start site. The chain is Translation initiation factor eIF2B subunit epsilon (GCD6) from Saccharomyces cerevisiae (strain ATCC 204508 / S288c) (Baker's yeast).